The following is a 287-amino-acid chain: ATP synthase gamma chain (287 aa).

It belongs to the ATPase gamma chain family. As to quaternary structure, F-type ATPases have 2 components, CF(1) - the catalytic core - and CF(0) - the membrane proton channel. CF(1) has five subunits: alpha(3), beta(3), gamma(1), delta(1), epsilon(1). CF(0) has three main subunits: a, b and c.

Its subcellular location is the cell inner membrane. Functionally, produces ATP from ADP in the presence of a proton gradient across the membrane. The gamma chain is believed to be important in regulating ATPase activity and the flow of protons through the CF(0) complex. The protein is ATP synthase gamma chain of Geobacter metallireducens (strain ATCC 53774 / DSM 7210 / GS-15).